The following is a 313-amino-acid chain: UPF0761 membrane protein VV0203 (313 aa).

6 helical membrane-spanning segments follow: residues 41 to 61, 104 to 124, 139 to 159, 185 to 205, 215 to 235, and 249 to 269; these read YLAY…LSIL, MTAV…SNID, AVFS…LVGA, LLRW…YLLV, AVVG…GFAA, and ALAA…IVLI. A disordered region spans residues 293 to 313; that stretch reads LPNNDTELEKDTQRDRFDSES. The segment covering 299-313 has biased composition (basic and acidic residues); the sequence is ELEKDTQRDRFDSES.

It belongs to the UPF0761 family.

It localises to the cell inner membrane. This is UPF0761 membrane protein VV0203 from Vibrio vulnificus (strain YJ016).